Consider the following 325-residue polypeptide: Tetraacyldisaccharide 4'-kinase (325 aa).

Residue Thr58–Thr65 coordinates ATP.

Belongs to the LpxK family.

It catalyses the reaction a lipid A disaccharide + ATP = a lipid IVA + ADP + H(+). It functions in the pathway glycolipid biosynthesis; lipid IV(A) biosynthesis; lipid IV(A) from (3R)-3-hydroxytetradecanoyl-[acyl-carrier-protein] and UDP-N-acetyl-alpha-D-glucosamine: step 6/6. Transfers the gamma-phosphate of ATP to the 4'-position of a tetraacyldisaccharide 1-phosphate intermediate (termed DS-1-P) to form tetraacyldisaccharide 1,4'-bis-phosphate (lipid IVA). This chain is Tetraacyldisaccharide 4'-kinase, found in Coxiella burnetii (strain CbuK_Q154) (Coxiella burnetii (strain Q154)).